We begin with the raw amino-acid sequence, 176 residues long: Cytochrome b (176 aa).

3 helical membrane-spanning segments follow: residues 33–53 (FGSLLGLCLLIQILTGLFLAM), 77–98 (WLIRYMHANGASLFFICLFLHV), and 113–133 (WNIGVILLFAVMATAFMGYVL). 2 residues coordinate heme b: His-83 and His-97.

This sequence belongs to the cytochrome b family. The cytochrome bc1 complex contains 11 subunits: 3 respiratory subunits (MT-CYB, CYC1 and UQCRFS1), 2 core proteins (UQCRC1 and UQCRC2) and 6 low-molecular weight proteins (UQCRH/QCR6, UQCRB/QCR7, UQCRQ/QCR8, UQCR10/QCR9, UQCR11/QCR10 and a cleavage product of UQCRFS1). This cytochrome bc1 complex then forms a dimer. Heme b is required as a cofactor.

It localises to the mitochondrion inner membrane. Functionally, component of the ubiquinol-cytochrome c reductase complex (complex III or cytochrome b-c1 complex) that is part of the mitochondrial respiratory chain. The b-c1 complex mediates electron transfer from ubiquinol to cytochrome c. Contributes to the generation of a proton gradient across the mitochondrial membrane that is then used for ATP synthesis. In Sciurus carolinensis (Eastern gray squirrel), this protein is Cytochrome b (MT-CYB).